A 369-amino-acid chain; its full sequence is Anhydro-N-acetylmuramic acid kinase (369 aa).

12 to 19 provides a ligand contact to ATP; the sequence is GTSLDGVD.

It belongs to the anhydro-N-acetylmuramic acid kinase family.

It catalyses the reaction 1,6-anhydro-N-acetyl-beta-muramate + ATP + H2O = N-acetyl-D-muramate 6-phosphate + ADP + H(+). It participates in amino-sugar metabolism; 1,6-anhydro-N-acetylmuramate degradation. Its pathway is cell wall biogenesis; peptidoglycan recycling. In terms of biological role, catalyzes the specific phosphorylation of 1,6-anhydro-N-acetylmuramic acid (anhMurNAc) with the simultaneous cleavage of the 1,6-anhydro ring, generating MurNAc-6-P. Is required for the utilization of anhMurNAc either imported from the medium or derived from its own cell wall murein, and thus plays a role in cell wall recycling. The chain is Anhydro-N-acetylmuramic acid kinase from Actinobacillus pleuropneumoniae serotype 5b (strain L20).